The primary structure comprises 346 residues: GTPase Obg (346 aa).

Residues Met1 to Ile158 form the Obg domain. The OBG-type G domain occupies Ala159–Arg327. Residues Gly165–Ser172, Phe190–Ala194, Asp212–Gly215, Asn279–Asp282, and Ser308–Phe310 each bind GTP. Residues Ser172 and Thr192 each contribute to the Mg(2+) site.

It belongs to the TRAFAC class OBG-HflX-like GTPase superfamily. OBG GTPase family. As to quaternary structure, monomer. It depends on Mg(2+) as a cofactor.

It is found in the cytoplasm. Functionally, an essential GTPase which binds GTP, GDP and possibly (p)ppGpp with moderate affinity, with high nucleotide exchange rates and a fairly low GTP hydrolysis rate. Plays a role in control of the cell cycle, stress response, ribosome biogenesis and in those bacteria that undergo differentiation, in morphogenesis control. The chain is GTPase Obg from Phenylobacterium zucineum (strain HLK1).